A 477-amino-acid chain; its full sequence is Ribosomal RNA small subunit methyltransferase F (477 aa).

S-adenosyl-L-methionine is bound by residues 125-131 (AAAPGSK), Glu-149, Asp-176, and Asp-194. The active-site Nucleophile is the Cys-247.

Belongs to the class I-like SAM-binding methyltransferase superfamily. RsmB/NOP family.

It localises to the cytoplasm. It catalyses the reaction cytidine(1407) in 16S rRNA + S-adenosyl-L-methionine = 5-methylcytidine(1407) in 16S rRNA + S-adenosyl-L-homocysteine + H(+). Specifically methylates the cytosine at position 1407 (m5C1407) of 16S rRNA. The polypeptide is Ribosomal RNA small subunit methyltransferase F (Klebsiella pneumoniae (strain 342)).